Here is a 531-residue protein sequence, read N- to C-terminus: Apolipoprotein N-acyltransferase (531 aa).

Helical transmembrane passes span 8–28, 34–54, 69–89, 105–125, 136–156, 178–198, and 206–226; these read IILLSGVSRTFVGFLAGLLAV, FGIFAAAFVSFPVLVWLIDGV, PAAIGWSFGFGYFLGGLWWLG, LTVVGLPAVLGLFYALAVVIA, IAALALGFGIAEWLRGFLFTG, VVNLSTINMLAVFVFAAPALI, and AGLAIAAALFTAHVAFGFYRL. The 251-residue stretch at 243-493 folds into the CN hydrolase domain; the sequence is VQPVIDQAKK…RGVIDTILPG (251 aa). Residue E287 is the Proton acceptor of the active site. Residue K351 is part of the active site. The active-site Nucleophile is C405. The helical transmembrane segment at 507 to 527 threads the bilayer; the sequence is IFWLTTGILFLVAAISRLGFN.

Belongs to the CN hydrolase family. Apolipoprotein N-acyltransferase subfamily.

The protein resides in the cell inner membrane. It carries out the reaction N-terminal S-1,2-diacyl-sn-glyceryl-L-cysteinyl-[lipoprotein] + a glycerophospholipid = N-acyl-S-1,2-diacyl-sn-glyceryl-L-cysteinyl-[lipoprotein] + a 2-acyl-sn-glycero-3-phospholipid + H(+). It functions in the pathway protein modification; lipoprotein biosynthesis (N-acyl transfer). Functionally, catalyzes the phospholipid dependent N-acylation of the N-terminal cysteine of apolipoprotein, the last step in lipoprotein maturation. The sequence is that of Apolipoprotein N-acyltransferase from Rhizobium meliloti (strain 1021) (Ensifer meliloti).